Here is a 373-residue protein sequence, read N- to C-terminus: WAT1-related protein At4g30420 (373 aa).

Helical transmembrane passes span 2-22 (AMTM…ATLV), 29-49 (VFIL…LYLS), 55-75 (IAIS…SLIG), 94-114 (MGSA…FLAG), 125-145 (GLAK…MTLL), 173-193 (WLIG…WLIL), 205-225 (LSLS…VTFF), 244-264 (CLYA…WAIA), 270-290 (FSAL…ALFF), and 294-314 (IYTG…TVLW). EamA domains lie at 9–135 (CYAG…TILC) and 186–313 (CWSF…YTVL).

It belongs to the drug/metabolite transporter (DMT) superfamily. Plant drug/metabolite exporter (P-DME) (TC 2.A.7.4) family.

It is found in the membrane. The protein is WAT1-related protein At4g30420 of Arabidopsis thaliana (Mouse-ear cress).